Consider the following 184-residue polypeptide: Putative tetraheme cytochrome-c type (184 aa).

Residues 1-14 (MSKHAASSAKRFSL) are Cytoplasmic-facing. A helical transmembrane segment spans residues 15-35 (LALGLMFVGGIVFVWAVDFGI). The Periplasmic portion of the chain corresponds to 36-184 (KTTNTLEFCT…HEPTEPDDAS (149 aa)). 6 residues coordinate heme: Cys44, Cys47, Met50, Cys73, Cys76, and His77. The substrate site is built by Lys89 and Asp95. Residues Asp95, Cys133, Cys136, His137, Cys165, Cys168, His169, and His174 each coordinate heme.

The protein belongs to the NapC/NirT/NrfH family. Binds 4 heme groups per subunit.

The protein localises to the cell inner membrane. This Allochromatium vinosum (strain ATCC 17899 / DSM 180 / NBRC 103801 / NCIMB 10441 / D) (Chromatium vinosum) protein is Putative tetraheme cytochrome-c type.